The primary structure comprises 431 residues: MSDTLRVAGGAVLHPDFTVSDGDVLVDRDAGEIIAVGDTPAGDETVDAAGCLVMPGLVNAHCHVAMTLLRGYADDKQLDAWLQEDIWPAEAELADGDIRAGARLGLVEMIRAGTTAFADMYFEVPEVVDAITEAGLRARVGHGVVTVGKDDADAVADNEEALSVAREFNDAADGRITSAYMPHSLTTVGEEYLREFVAAAREADVPVHFHANETEQEVEPIVDEHGSRPLEYAADVGLLAEDDFLAHGVHTTAGEIELLAESGASVVHCPASNMKLASGMAPVQAMREAGVTVALGTDGAASNNDLDVFDELRDAAMLGKLQTGAADAVPARAAVEMATAGGAAALGFDSGRIEVGANADLAVVDFDAPHLTPVHDHVSHLAYAATGQDVRHTICDGEVLMRDREVLPFDEAAVREQAAQRASELAARAGE.

Residues H61 and H63 each coordinate Zn(2+). Positions 90 and 183 each coordinate substrate. Residue H210 participates in Zn(2+) binding. E213 and D298 together coordinate substrate. A Zn(2+)-binding site is contributed by D298.

Belongs to the metallo-dependent hydrolases superfamily. MTA/SAH deaminase family. Zn(2+) serves as cofactor.

The enzyme catalyses S-adenosyl-L-homocysteine + H2O + H(+) = S-inosyl-L-homocysteine + NH4(+). It carries out the reaction S-methyl-5'-thioadenosine + H2O + H(+) = S-methyl-5'-thioinosine + NH4(+). Catalyzes the deamination of 5-methylthioadenosine and S-adenosyl-L-homocysteine into 5-methylthioinosine and S-inosyl-L-homocysteine, respectively. Is also able to deaminate adenosine. This is 5-methylthioadenosine/S-adenosylhomocysteine deaminase from Halobacterium salinarum (strain ATCC 700922 / JCM 11081 / NRC-1) (Halobacterium halobium).